The primary structure comprises 275 residues: MSVKAYLELIRVHNVVGSAVSAFMGYVIATTWKFTPLFFLPLLVVSLIAAGGYVINDVYDIEVDKINKPERPLPSGRIAVNIARRFSIVLFAVGLIISIPLGLIPFGFALITIVLLYEYARSLKKLGLVGNFIVALTSALSAYYGGLASGSLLGNFIIPTIYIFFFTLSREFVKGIEDIEGDKRNGVNTLAVKLGEKSTWIIAKIILGILIFTSPLPYFLGFNVIYLIGILALDVLLVYILILHNTIESATKARSLMKIYAIGTLIVFTLGSLRI.

Transmembrane regions (helical) follow at residues 12–32, 35–55, 88–108, 125–145, 146–166, 200–220, 224–244, and 255–275; these read VHNV…ATTW, TPLF…GYVI, IVLF…PFGF, KLGL…AYYG, GLAS…IFFF, WIIA…PYFL, VIYL…LILH, and SLMK…SLRI.

This sequence belongs to the UbiA prenyltransferase family. DGGGP synthase subfamily. Mg(2+) serves as cofactor.

It is found in the cell membrane. It carries out the reaction sn-3-O-(geranylgeranyl)glycerol 1-phosphate + (2E,6E,10E)-geranylgeranyl diphosphate = 2,3-bis-O-(geranylgeranyl)-sn-glycerol 1-phosphate + diphosphate. The protein operates within membrane lipid metabolism; glycerophospholipid metabolism. In terms of biological role, prenyltransferase that catalyzes the transfer of the geranylgeranyl moiety of geranylgeranyl diphosphate (GGPP) to the C2 hydroxyl of (S)-3-O-geranylgeranylglyceryl phosphate (GGGP). This reaction is the second ether-bond-formation step in the biosynthesis of archaeal membrane lipids. This Sulfolobus acidocaldarius (strain ATCC 33909 / DSM 639 / JCM 8929 / NBRC 15157 / NCIMB 11770) protein is Digeranylgeranylglyceryl phosphate synthase.